Consider the following 176-residue polypeptide: tRNA (cytidine(56)-2'-O)-methyltransferase (176 aa).

Residues L86 and 111–115 (GAEKV) contribute to the S-adenosyl-L-methionine site.

This sequence belongs to the aTrm56 family. As to quaternary structure, homodimer.

Its subcellular location is the cytoplasm. The catalysed reaction is cytidine(56) in tRNA + S-adenosyl-L-methionine = 2'-O-methylcytidine(56) in tRNA + S-adenosyl-L-homocysteine + H(+). In terms of biological role, specifically catalyzes the AdoMet-dependent 2'-O-ribose methylation of cytidine at position 56 in tRNAs. In Methanoregula boonei (strain DSM 21154 / JCM 14090 / 6A8), this protein is tRNA (cytidine(56)-2'-O)-methyltransferase.